A 142-amino-acid chain; its full sequence is Putative pre-16S rRNA nuclease (142 aa).

This sequence belongs to the YqgF nuclease family.

The protein resides in the cytoplasm. In terms of biological role, could be a nuclease involved in processing of the 5'-end of pre-16S rRNA. The chain is Putative pre-16S rRNA nuclease from Staphylococcus aureus (strain JH1).